Consider the following 110-residue polypeptide: Glutaredoxin-2 (110 aa).

Residues 6–106 (KAFVEKAISN…KMIAELKENK (101 aa)) form the Glutaredoxin domain. C26 and C29 form a disulfide bridge.

Belongs to the glutaredoxin family.

Its function is as follows. The disulfide bond functions as an electron carrier in the glutathione-dependent synthesis of deoxyribonucleotides by the enzyme ribonucleotide reductase. In addition, it is also involved in reducing some disulfides in a coupled system with glutathione reductase. Thioltransferase catalyzes cellular thiol-disulfide transhydrogenation reactions. It transfers reducing equivalents to cytosolic protein and nonprotein disulfides. This chain is Glutaredoxin-2 (grx2), found in Schizosaccharomyces pombe (strain 972 / ATCC 24843) (Fission yeast).